The chain runs to 224 residues: Putative homeobox protein R749 (224 aa).

Residues K139–Q162 are disordered. Residues Q161–L220 constitute a DNA-binding region (homeobox).

It localises to the host nucleus. The protein is Putative homeobox protein R749 of Acanthamoeba polyphaga mimivirus (APMV).